The following is an 894-amino-acid chain: Kinesin-like protein KIN-UB (894 aa).

Residues 1–53 (MAMASSRNGAVRGSMRPVSGANSSNLRSSSFKSRIPSSAPAPRRSSSASIGAA) form a disordered region. Low complexity predominate over residues 19–50 (SGANSSNLRSSSFKSRIPSSAPAPRRSSSASI). The Kinesin motor domain maps to 60 to 402 (RVRVAVRLRP…ILFGQRAMKV (343 aa)). Residue 145 to 152 (GQTGTGKT) coordinates ATP. Positions 372 to 380 (RTSLIVTIG) match the D-BOX motif. Residues 423–588 (VQLDKVIAEN…RSQLVQLTFE (166 aa)) are a coiled coil. 2 disordered regions span residues 530-550 (EEEV…GEGE) and 598-623 (RGAP…ESVN). A compositionally biased stretch (polar residues) spans 603–623 (NSYSGTDSLPSRHSQARESVN). ARM repeat units follow at residues 626–665 (KAPF…NLAA), 667–707 (EANQ…NLAM), 709–749 (EVSQ…NLCG), and 751–790 (DKLQ…NFAK).

This sequence belongs to the TRAFAC class myosin-kinesin ATPase superfamily. Kinesin family. Ungrouped subfamily. Interacts (via C-terminus) with NEK5. Expressed in the basal regions and petioles of immature leaves and in the root elongation zone.

Its subcellular location is the cytoplasm. The protein localises to the cytoskeleton. In terms of biological role, involved in the control of epidermal-cell morphogenesis in roots and helical growth of roots by promoting microtubule depolymerization and limiting the accumulation of endoplasmic microtubules. Seems to be involved in the control of cell-file rotation (or twisting). This is Kinesin-like protein KIN-UB from Arabidopsis thaliana (Mouse-ear cress).